The sequence spans 349 residues: Glycosyltransferase 8 domain-containing protein 2 (349 aa).

The Cytoplasmic segment spans residues 1-6; that stretch reads MALLRK. Residues 7–24 traverse the membrane as a helical; Signal-anchor for type II membrane protein segment; the sequence is INQVLLFLLIVTLCVILY. Topologically, residues 25-349 are lumenal; sequence KKVHKGTVSK…AGIFKLNHHS (325 aa). An N-linked (GlcNAc...) asparagine glycan is attached at N234.

It belongs to the glycosyltransferase 8 family.

The protein resides in the membrane. The sequence is that of Glycosyltransferase 8 domain-containing protein 2 (GLT8D2) from Macaca fascicularis (Crab-eating macaque).